The sequence spans 427 residues: ATP-dependent RNA helicase DDX39A (427 aa).

The segment covering 1 to 19 (MAEQDVENELLDYDEDEEP) has biased composition (acidic residues). Residues 1–36 (MAEQDVENELLDYDEDEEPQAPQESTPAPPKKDVKG) are disordered. Ala2 carries the post-translational modification N-acetylalanine. Lys31 participates in a covalent cross-link: Glycyl lysine isopeptide (Lys-Gly) (interchain with G-Cter in SUMO2). Position 35 is an N6-acetyllysine; alternate (Lys35). Lys35 is covalently cross-linked (Glycyl lysine isopeptide (Lys-Gly) (interchain with G-Cter in SUMO2); alternate). Ser37 bears the Phosphoserine mark. Residues 44-72 (SGFRDFLLKPELLRAIVDCGFEHPSEVQH) carry the Q motif motif. The Helicase ATP-binding domain maps to 75–248 (IPQAILGMDV…RKFMQDPMEV (174 aa)). 88–95 (AKSGMGKT) is a binding site for ATP. Glycyl lysine isopeptide (Lys-Gly) (interchain with G-Cter in SUMO2) cross-links involve residues Lys154 and Lys162. Thr171 carries the phosphothreonine modification. The DECD box motif lies at 195–198 (DECD). Glycyl lysine isopeptide (Lys-Gly) (interchain with G-Cter in SUMO2) cross-links involve residues Lys240 and Lys255. The Helicase C-terminal domain occupies 260-421 (GLQQYYVKLK…ELPEEIDIST (162 aa)). Ser426 carries the post-translational modification Phosphoserine.

Belongs to the DEAD box helicase family. DECD subfamily. As to quaternary structure, binds ALYREF/THOC4 and DDX39B/BAT1. Interacts with the apo-AREX complex component SARNP. Interacts with MX1. Interacts with MCM3AP isoform GANP. Interacts with ECD. Interacts with PHAX; this interaction stimulates PHAX RNA binding activity. Post-translationally, SUMOylated by RANBP2; SUMOylation modification affects its ability to bind RNA.

The protein resides in the nucleus. Its subcellular location is the cytoplasm. It carries out the reaction ATP + H2O = ADP + phosphate + H(+). Functionally, helicase that plays an essential role in mRNA export and is involved in multiple steps in RNA metabolism including alternative splicing. Regulates nuclear mRNA export to the cytoplasm through association with ECD. Also involved in spliceosomal uridine-rich small nuclear RNA (U snRNA) export by stimulating the RNA binding of adapter PHAX. Plays a role in the negative regulation of type I IFN production by increasing the nuclear retention of antiviral transcripts and thus reducing their protein expression. Independently of the interferon pathway, plays an antiviral role against alphaviruses by binding to a 5' conserved sequence element in the viral genomic RNA. This chain is ATP-dependent RNA helicase DDX39A, found in Mus musculus (Mouse).